The sequence spans 227 residues: 2-C-methyl-D-erythritol 4-phosphate cytidylyltransferase (227 aa).

It belongs to the IspD/TarI cytidylyltransferase family. IspD subfamily.

It catalyses the reaction 2-C-methyl-D-erythritol 4-phosphate + CTP + H(+) = 4-CDP-2-C-methyl-D-erythritol + diphosphate. Its pathway is isoprenoid biosynthesis; isopentenyl diphosphate biosynthesis via DXP pathway; isopentenyl diphosphate from 1-deoxy-D-xylulose 5-phosphate: step 2/6. Its function is as follows. Catalyzes the formation of 4-diphosphocytidyl-2-C-methyl-D-erythritol from CTP and 2-C-methyl-D-erythritol 4-phosphate (MEP). This Bordetella parapertussis (strain 12822 / ATCC BAA-587 / NCTC 13253) protein is 2-C-methyl-D-erythritol 4-phosphate cytidylyltransferase.